A 125-amino-acid chain; its full sequence is Conopressin-conophysin, isoform 1 (125 aa).

The first 22 residues, 1–22 (MQMGRPTLLPCLLLLLVLSTQA), serve as a signal peptide directing secretion. Residues Cys23 and Cys28 are joined by a disulfide bond. Gly31 carries the post-translational modification Glycine amide. A propeptide spanning residues 32–39 (GKRDVHMI) is cleaved from the precursor. Cystine bridges form between Cys45–Cys85, Cys48–Cys59, Cys53–Cys75, Cys60–Cys65, Cys92–Cys112, Cys104–Cys124, and Cys113–Cys118.

It belongs to the vasopressin/oxytocin family. Expressed by the venom gland.

Its subcellular location is the secreted. Targets vasopressin-oxytocin related receptors. In Conus monile (Necklace cone), this protein is Conopressin-conophysin, isoform 1.